The following is a 602-amino-acid chain: Lysine--tRNA ligase, chloroplastic/mitochondrial (602 aa).

The span at 50–62 shows a compositional bias: low complexity; it reads SSSSSSATTAETS. The disordered stretch occupies residues 50–83; the sequence is SSSSSSATTAETSKPSGRNRRSASSSNSTSDREA. A DNA-binding region (OB) is located at residues 136–214; it reads VSIAGRVVAR…SICVNSFSIL (79 aa). 2 residues coordinate substrate: glycine 285 and glutamate 309. ATP contacts are provided by residues 331 to 333 and 339 to 340; these read RNE and HN. Positions 347 and 349 each coordinate substrate. Residues glutamate 492 and glutamate 499 each coordinate Ca(2+). 499–500 contacts ATP; that stretch reads EM. Residues asparagine 502 and glutamate 506 each contribute to the substrate site. Residues 524-543 are compositionally biased toward basic and acidic residues; it reads HNAKRAEAVRESPEPNAKKD. The segment at 524–550 is disordered; it reads HNAKRAEAVRESPEPNAKKDDDDDESY. Residue 575–578 coordinates ATP; sequence GIDR.

The protein belongs to the class-II aminoacyl-tRNA synthetase family. Ca(2+) serves as cofactor.

The protein localises to the plastid. Its subcellular location is the chloroplast. The protein resides in the mitochondrion. It carries out the reaction tRNA(Lys) + L-lysine + ATP = L-lysyl-tRNA(Lys) + AMP + diphosphate. In terms of biological role, catalyzes the specific attachment of an amino acid to its cognate tRNA in a 2 step reaction: the amino acid (AA) is first activated by ATP to form AA-AMP and then transferred to the acceptor end of the tRNA. The polypeptide is Lysine--tRNA ligase, chloroplastic/mitochondrial (Arabidopsis thaliana (Mouse-ear cress)).